Here is a 111-residue protein sequence, read N- to C-terminus: Putative pterin-4-alpha-carbinolamine dehydratase (111 aa).

Belongs to the pterin-4-alpha-carbinolamine dehydratase family.

The enzyme catalyses (4aS,6R)-4a-hydroxy-L-erythro-5,6,7,8-tetrahydrobiopterin = (6R)-L-erythro-6,7-dihydrobiopterin + H2O. In Marinobacter nauticus (strain ATCC 700491 / DSM 11845 / VT8) (Marinobacter aquaeolei), this protein is Putative pterin-4-alpha-carbinolamine dehydratase.